Reading from the N-terminus, the 373-residue chain is uncharacterized protein (373 aa).

The protein belongs to the glycosyltransferase 28 family.

This is an uncharacterized protein from Bacillus subtilis (strain 168).